We begin with the raw amino-acid sequence, 254 residues long: Hydroxyethylthiazole kinase (254 aa).

Methionine 40 contributes to the substrate binding site. ATP contacts are provided by arginine 116 and serine 162. Position 189 (glycine 189) interacts with substrate.

It belongs to the Thz kinase family. Mg(2+) is required as a cofactor.

It carries out the reaction 5-(2-hydroxyethyl)-4-methylthiazole + ATP = 4-methyl-5-(2-phosphooxyethyl)-thiazole + ADP + H(+). Its pathway is cofactor biosynthesis; thiamine diphosphate biosynthesis; 4-methyl-5-(2-phosphoethyl)-thiazole from 5-(2-hydroxyethyl)-4-methylthiazole: step 1/1. Functionally, catalyzes the phosphorylation of the hydroxyl group of 4-methyl-5-beta-hydroxyethylthiazole (THZ). The chain is Hydroxyethylthiazole kinase from Limosilactobacillus fermentum (strain NBRC 3956 / LMG 18251) (Lactobacillus fermentum).